A 79-amino-acid polypeptide reads, in one-letter code: Sec-independent protein translocase protein TatA (79 aa).

Residues Met-1–Phe-21 traverse the membrane as a helical segment. The disordered stretch occupies residues Asp-46–Ser-79. A compositionally biased stretch (basic and acidic residues) spans Lys-66–Ser-79.

This sequence belongs to the TatA/E family. The Tat system comprises two distinct complexes: a TatABC complex, containing multiple copies of TatA, TatB and TatC subunits, and a separate TatA complex, containing only TatA subunits. Substrates initially bind to the TatABC complex, which probably triggers association of the separate TatA complex to form the active translocon.

The protein localises to the cell inner membrane. Part of the twin-arginine translocation (Tat) system that transports large folded proteins containing a characteristic twin-arginine motif in their signal peptide across membranes. TatA could form the protein-conducting channel of the Tat system. This chain is Sec-independent protein translocase protein TatA, found in Helicobacter pylori (strain HPAG1).